A 546-amino-acid polypeptide reads, in one-letter code: MPKILTFNEDARRALEHGVNALANAVKVTIGPRGRNVVIDKHYGAATITNDGVTIAREIELEDPYENLGAQLAKEVATKTNDVAGDGTTTATVLAQEMVRFGLKQVTAGAAPLTLKLGIEAAVEAVSAALLKQAIEVNSKETIAQVAAISAQDPQVGELIAEAIDKIGKDGVITVEESQTLGLDLELTEGMQFDKGYISPYFVTDAEAQEAVLEDAYVLLYPGKISALNEILPVLEQVVQERKPLLIIAEEVEGEALSTLVVNSIRKTFQVVAVKAPGFGDRRKALLQDIAVLTGGQVVASEVGLSLDAVTLADLGRARRVVVDKDNTTIVDGVGEASSIADRVRQLKQEIEVSDSDWDREKLQERLAKLAGGVAVIRVGAATEVELKERKHRLEDAVSATRAAIEEGIIAGGGSALTHVASVLDDGLGRTGDELAGVRIVRRALDAPLSWIARNAGLEGAVIVSKVKELEPGRGYNAATGEYTDLIAAGVIDPVKVTRSAVANAASIAALLITTEGLVVEKPAEPAPQDGHGHGHGHSHPQGPGF.

ATP is bound by residues 29 to 32 (TIGP), 86 to 90 (DGTTT), Gly-413, 477 to 479 (NAA), and Asp-493. A disordered region spans residues 523-546 (PAEPAPQDGHGHGHGHSHPQGPGF).

This sequence belongs to the chaperonin (HSP60) family. Forms a cylinder of 14 subunits composed of two heptameric rings stacked back-to-back. Interacts with the co-chaperonin GroES.

The protein resides in the cytoplasm. The catalysed reaction is ATP + H2O + a folded polypeptide = ADP + phosphate + an unfolded polypeptide.. Its function is as follows. Together with its co-chaperonin GroES, plays an essential role in assisting protein folding. The GroEL-GroES system forms a nano-cage that allows encapsulation of the non-native substrate proteins and provides a physical environment optimized to promote and accelerate protein folding. The chain is Chaperonin GroEL 1 from Frankia casuarinae (strain DSM 45818 / CECT 9043 / HFP020203 / CcI3).